A 417-amino-acid polypeptide reads, in one-letter code: Serine hydroxymethyltransferase (417 aa).

Residues L121 and 125-127 (GHL) contribute to the (6S)-5,6,7,8-tetrahydrofolate site. K230 is subject to N6-(pyridoxal phosphate)lysine. 355 to 357 (SPF) is a (6S)-5,6,7,8-tetrahydrofolate binding site.

This sequence belongs to the SHMT family. In terms of assembly, homodimer. Pyridoxal 5'-phosphate is required as a cofactor.

The protein localises to the cytoplasm. The enzyme catalyses (6R)-5,10-methylene-5,6,7,8-tetrahydrofolate + glycine + H2O = (6S)-5,6,7,8-tetrahydrofolate + L-serine. It participates in one-carbon metabolism; tetrahydrofolate interconversion. It functions in the pathway amino-acid biosynthesis; glycine biosynthesis; glycine from L-serine: step 1/1. Functionally, catalyzes the reversible interconversion of serine and glycine with tetrahydrofolate (THF) serving as the one-carbon carrier. This reaction serves as the major source of one-carbon groups required for the biosynthesis of purines, thymidylate, methionine, and other important biomolecules. Also exhibits THF-independent aldolase activity toward beta-hydroxyamino acids, producing glycine and aldehydes, via a retro-aldol mechanism. This chain is Serine hydroxymethyltransferase, found in Ruthia magnifica subsp. Calyptogena magnifica.